A 115-amino-acid polypeptide reads, in one-letter code: Putative membrane protein insertion efficiency factor (115 aa).

Residues 81 to 115 are disordered; sequence DPRPGRCGCKDAGPAVSAGSTEGNPGRRTDGTDPD. The span at 105-115 shows a compositional bias: basic and acidic residues; it reads PGRRTDGTDPD.

Belongs to the UPF0161 family.

It localises to the cell inner membrane. In terms of biological role, could be involved in insertion of integral membrane proteins into the membrane. The chain is Putative membrane protein insertion efficiency factor from Rhodospirillum rubrum (strain ATCC 11170 / ATH 1.1.1 / DSM 467 / LMG 4362 / NCIMB 8255 / S1).